Here is a 95-residue protein sequence, read N- to C-terminus: Co-chaperonin GroES (95 aa).

The protein belongs to the GroES chaperonin family. As to quaternary structure, heptamer of 7 subunits arranged in a ring. Interacts with the chaperonin GroEL.

Its subcellular location is the cytoplasm. Functionally, together with the chaperonin GroEL, plays an essential role in assisting protein folding. The GroEL-GroES system forms a nano-cage that allows encapsulation of the non-native substrate proteins and provides a physical environment optimized to promote and accelerate protein folding. GroES binds to the apical surface of the GroEL ring, thereby capping the opening of the GroEL channel. The protein is Co-chaperonin GroES of Chlorobaculum tepidum (strain ATCC 49652 / DSM 12025 / NBRC 103806 / TLS) (Chlorobium tepidum).